We begin with the raw amino-acid sequence, 305 residues long: UDP-3-O-acyl-N-acetylglucosamine deacetylase (305 aa).

Zn(2+) is bound by residues H79, H238, and D242. H265 (proton donor) is an active-site residue.

The protein belongs to the LpxC family. It depends on Zn(2+) as a cofactor.

It catalyses the reaction a UDP-3-O-[(3R)-3-hydroxyacyl]-N-acetyl-alpha-D-glucosamine + H2O = a UDP-3-O-[(3R)-3-hydroxyacyl]-alpha-D-glucosamine + acetate. Its pathway is glycolipid biosynthesis; lipid IV(A) biosynthesis; lipid IV(A) from (3R)-3-hydroxytetradecanoyl-[acyl-carrier-protein] and UDP-N-acetyl-alpha-D-glucosamine: step 2/6. Catalyzes the hydrolysis of UDP-3-O-myristoyl-N-acetylglucosamine to form UDP-3-O-myristoylglucosamine and acetate, the committed step in lipid A biosynthesis. The sequence is that of UDP-3-O-acyl-N-acetylglucosamine deacetylase from Edwardsiella ictaluri (strain 93-146).